A 287-amino-acid chain; its full sequence is MNKIRYPAVAGLFYPSHPDELIDMIEQCYLHKFGPKSMPVHGTYEKPIGLLCPHAGYVYSGPIQAHSYYELSKRVDALEETTVVILGPNHTGLGSGVSVMDGIWRTPLGDVKCDEEFVEELWRKCEIVDLDETAHLNEHSIEVQLPFLKHLELLNIAKFKIVPICMMFQDYETAVEVGYFIAKIAKELNRRIVVIASSDLTHYEPQEIASKKDAIVIKDILEMNEKELYEDVVNYNISMCGYGPVIAMLKAMKTLGAEKAKLLAYATSGDITGDYSAVVGYASAIVE.

The protein belongs to the MEMO1 family.

In Methanocaldococcus jannaschii (strain ATCC 43067 / DSM 2661 / JAL-1 / JCM 10045 / NBRC 100440) (Methanococcus jannaschii), this protein is MEMO1 family protein MJ0403.